The chain runs to 235 residues: Small ribosomal subunit protein uS3 (235 aa).

Residues 39 to 107 (VRKFLNKELA…PAQINIAEVK (69 aa)) form the KH type-2 domain.

Belongs to the universal ribosomal protein uS3 family. As to quaternary structure, part of the 30S ribosomal subunit. Forms a tight complex with proteins S10 and S14.

Functionally, binds the lower part of the 30S subunit head. Binds mRNA in the 70S ribosome, positioning it for translation. The protein is Small ribosomal subunit protein uS3 of Actinobacillus pleuropneumoniae serotype 5b (strain L20).